Consider the following 388-residue polypeptide: MKIISVLGSTGSIGTQTLEVVRNNKDLKVSALAASSNITLLEEQIREFHPKLVCVYDREKALELKKRVSDLEVTVEAGMDGLIACATEESADIVVSAVVGMIGIKPVMEAILRGKDIAFANKETLVTAGHLIMPLVKKHNVNLLPVDSEHSAIFQCLQGNESSTVSRIILTASGGPFRGKSLAELKNVKVEDALKHPNWSMGRKITIDSATMVNKGLEVMEAHWLFHEPLNKIEVVIQPQSIIHSAVEFEDGGIIAQLGTPDMKLPIQYALYYPEKRRYLPGKRLDFFDIAKITFEKPDISNLPGLRLAYEAMNTGHSVPTVFNAANELAVAKFLNREISFLSITALIEKAMENVTVVKRPTLDEILNVEQETYDFIERECVKSNYHI.

The NADPH site is built by Thr10, Gly11, Ser12, Ile13, Asn37, and Asn121. 1-deoxy-D-xylulose 5-phosphate is bound at residue Lys122. Residue Glu123 coordinates NADPH. Asp147 serves as a coordination point for Mn(2+). Residues Ser148, Glu149, Ser173, and His196 each coordinate 1-deoxy-D-xylulose 5-phosphate. Glu149 contributes to the Mn(2+) binding site. Gly202 is a binding site for NADPH. 1-deoxy-D-xylulose 5-phosphate contacts are provided by Ser209, Asn214, Lys215, and Glu218. Glu218 provides a ligand contact to Mn(2+).

It belongs to the DXR family. It depends on Mg(2+) as a cofactor. Mn(2+) is required as a cofactor.

The enzyme catalyses 2-C-methyl-D-erythritol 4-phosphate + NADP(+) = 1-deoxy-D-xylulose 5-phosphate + NADPH + H(+). The protein operates within isoprenoid biosynthesis; isopentenyl diphosphate biosynthesis via DXP pathway; isopentenyl diphosphate from 1-deoxy-D-xylulose 5-phosphate: step 1/6. Functionally, catalyzes the NADPH-dependent rearrangement and reduction of 1-deoxy-D-xylulose-5-phosphate (DXP) to 2-C-methyl-D-erythritol 4-phosphate (MEP). This Lachnoclostridium phytofermentans (strain ATCC 700394 / DSM 18823 / ISDg) (Clostridium phytofermentans) protein is 1-deoxy-D-xylulose 5-phosphate reductoisomerase.